The sequence spans 242 residues: Biosynthetic peptidoglycan transglycosylase (242 aa).

The helical transmembrane segment at 19–39 threads the bilayer; the sequence is LMVVLAVFWGGGIALFSVAPV.

Belongs to the glycosyltransferase 51 family.

It localises to the cell inner membrane. It carries out the reaction [GlcNAc-(1-&gt;4)-Mur2Ac(oyl-L-Ala-gamma-D-Glu-L-Lys-D-Ala-D-Ala)](n)-di-trans,octa-cis-undecaprenyl diphosphate + beta-D-GlcNAc-(1-&gt;4)-Mur2Ac(oyl-L-Ala-gamma-D-Glu-L-Lys-D-Ala-D-Ala)-di-trans,octa-cis-undecaprenyl diphosphate = [GlcNAc-(1-&gt;4)-Mur2Ac(oyl-L-Ala-gamma-D-Glu-L-Lys-D-Ala-D-Ala)](n+1)-di-trans,octa-cis-undecaprenyl diphosphate + di-trans,octa-cis-undecaprenyl diphosphate + H(+). Its pathway is cell wall biogenesis; peptidoglycan biosynthesis. Its function is as follows. Peptidoglycan polymerase that catalyzes glycan chain elongation from lipid-linked precursors. This is Biosynthetic peptidoglycan transglycosylase from Escherichia coli O139:H28 (strain E24377A / ETEC).